A 225-amino-acid chain; its full sequence is Doublesex- and mab-3-related transcription factor C1 (225 aa).

The segment covering 1–12 (MQRPSGSREVRK) has biased composition (basic and acidic residues). 2 disordered regions span residues 1–49 (MQRP…SHVH) and 179–216 (QTRH…LPSG). A compositionally biased stretch (basic residues) spans 27–37 (RVKKHVVRRQK).

Belongs to the DMRT family.

The protein is Doublesex- and mab-3-related transcription factor C1 (Dmrtc1) of Rattus norvegicus (Rat).